We begin with the raw amino-acid sequence, 1160 residues long: Envelope glycoprotein (1160 aa).

The first 22 residues, 1–22, serve as a signal peptide directing secretion; the sequence is MDTPGSLQVIAIISLLLVGGAS. Residues 23 to 853 lie on the Extracellular side of the membrane; that stretch reads QPATFLEKAL…DGSVWSQLQL (831 aa). N-linked (GlcNAc...) asparagine; by host glycosylation is found at Asn-50, Asn-95, Asn-109, Asn-134, Asn-148, Asn-232, Asn-254, Asn-304, Asn-323, Asn-621, Asn-664, Asn-722, and Asn-771. Residues 230–251 form a disordered region; the sequence is VPNSTLSPTGTTDFTKFTPNPI. The helical transmembrane segment at 854–874 threads the bilayer; that stretch reads IIVVITCTIPLLWVLNTCLFF. The Cytoplasmic portion of the chain corresponds to 875 to 1048; sequence KLRRAIRRER…VNQHAEYMGK (174 aa). Residues 1049–1069 traverse the membrane as a helical segment; that stretch reads PVIVTLAGLVITPVGLAWIPL. Residues 1070-1127 lie on the Extracellular side of the membrane; sequence PQQEPLEKLFMVPNSMPHVTVAMADYHETKEMGKIVKDINNEELLLVKPQLFKWGPEG. The helical transmembrane segment at 1128-1148 threads the bilayer; sequence FFVACPLVIRGVVTGHSLLHI. Over 1149–1160 the chain is Cytoplasmic; the sequence is ACPATAVQAEGT.

The mature envelope protein (Env) consists of a trimer of SU-TM heterodimers attached by non-covalent interactions or by a labile interchain disulfide bond. Post-translationally, specific enzymatic cleavages in vivo yield mature proteins. Envelope glycoproteins are synthesized as an inactive precursor that is N-glycosylated and processed likely by host cell furin or by a furin-like protease in the Golgi to yield the mature SU and TM proteins. The cleavage site between SU and TM requires the minimal sequence [KR]-X-[KR]-R.

The protein localises to the virion membrane. It is found in the host cell membrane. (SU) attaches the virus to the host cell by binding to its receptor. This interaction triggers the refolding of the transmembrane protein (TM) and is thought to activate its fusogenic potential by unmasking its fusion peptide. Fusion occurs at the host cell plasma membrane. Its function is as follows. (TM) acts as a class I viral fusion protein. Under the current model, the protein has at least 3 conformational states: pre-fusion native state, pre-hairpin intermediate state, and post-fusion hairpin state. During viral and target cell membrane fusion, the coiled coil regions (heptad repeats) assume a trimer-of-hairpins structure, positioning the fusion peptide in close proximity to the C-terminal region of the ectodomain. The formation of this structure appears to drive apposition and subsequent fusion of viral and target cell membranes. Membranes fusion leads to delivery of the nucleocapsid into the cytoplasm. The chain is Envelope glycoprotein (env) from Walleye dermal sarcoma virus (WDSV).